The primary structure comprises 231 residues: Protein usf (231 aa).

This is Protein usf (usf) from Aquifex pyrophilus.